Here is a 592-residue protein sequence, read N- to C-terminus: Arginine--tRNA ligase (592 aa).

Positions 139 to 149 match the 'HIGH' region motif; that stretch reads ANPNGPLHIGH.

Belongs to the class-I aminoacyl-tRNA synthetase family.

The protein resides in the cytoplasm. The catalysed reaction is tRNA(Arg) + L-arginine + ATP = L-arginyl-tRNA(Arg) + AMP + diphosphate. The chain is Arginine--tRNA ligase from Methanopyrus kandleri (strain AV19 / DSM 6324 / JCM 9639 / NBRC 100938).